The following is a 154-amino-acid chain: CASP-like protein 5C2 (154 aa).

The Cytoplasmic portion of the chain corresponds to Met-1–Arg-17. A helical membrane pass occupies residues Phe-18–Tyr-38. The Extracellular segment spans residues Asp-39–Thr-41. The chain crosses the membrane as a helical span at residues Thr-42–Leu-62. Over Thr-63–Ser-81 the chain is Cytoplasmic. A helical transmembrane segment spans residues Ile-82 to Ala-102. Over Ser-103 to Ala-128 the chain is Extracellular. Residues Ala-129–Leu-149 traverse the membrane as a helical segment. At Pro-150–Tyr-154 the chain is on the cytoplasmic side.

It belongs to the Casparian strip membrane proteins (CASP) family. As to quaternary structure, homodimer and heterodimers.

The protein resides in the cell membrane. In Arabidopsis thaliana (Mouse-ear cress), this protein is CASP-like protein 5C2.